The chain runs to 92 residues: Small ribosomal subunit protein uS19c (92 aa).

This sequence belongs to the universal ribosomal protein uS19 family. As to quaternary structure, component of the chloroplast small ribosomal subunit (SSU). Mature 70S chloroplast ribosomes of higher plants consist of a small (30S) and a large (50S) subunit. The 30S small subunit contains 1 molecule of ribosomal RNA (16S rRNA) and 24 different proteins. The 50S large subunit contains 3 rRNA molecules (23S, 5S and 4.5S rRNA) and 33 different proteins. uS19c binds directly to 16S ribosomal RNA.

The protein localises to the plastid. It is found in the chloroplast. Component of the chloroplast ribosome (chloro-ribosome), a dedicated translation machinery responsible for the synthesis of chloroplast genome-encoded proteins, including proteins of the transcription and translation machinery and components of the photosynthetic apparatus. This Spinacia oleracea (Spinach) protein is Small ribosomal subunit protein uS19c (rps19).